The following is a 508-amino-acid chain: Maturase K (508 aa).

The protein belongs to the intron maturase 2 family. MatK subfamily.

The protein localises to the plastid. The protein resides in the chloroplast. In terms of biological role, usually encoded in the trnK tRNA gene intron. Probably assists in splicing its own and other chloroplast group II introns. This is Maturase K from Marathrum schiedeanum.